The primary structure comprises 454 residues: Bifunctional protein GlmU (454 aa).

The tract at residues 1-228 is pyrophosphorylase; the sequence is MTLPLHVVIL…PQDVEGANDP (228 aa). Residues 10-13, K24, Q76, 81-82, 103-105, G138, E153, N168, and N226 each bind UDP-N-acetyl-alpha-D-glucosamine; these read LAAG, GT, and YGD. D105 lines the Mg(2+) pocket. Residue N226 coordinates Mg(2+). A linker region spans residues 229-249; it reads WQLAQLERAWQLRAARALCLQ. The interval 250 to 454 is N-acetyltransferase; it reads GVRMADPARV…IEGWERPKKK (205 aa). UDP-N-acetyl-alpha-D-glucosamine-binding residues include R332 and K350. H362 functions as the Proton acceptor in the catalytic mechanism. Residues Y365 and N376 each contribute to the UDP-N-acetyl-alpha-D-glucosamine site. Acetyl-CoA contacts are provided by residues A379, 385–386, S404, A422, and R439; that span reads NY.

This sequence in the N-terminal section; belongs to the N-acetylglucosamine-1-phosphate uridyltransferase family. It in the C-terminal section; belongs to the transferase hexapeptide repeat family. Homotrimer. The cofactor is Mg(2+).

It is found in the cytoplasm. The enzyme catalyses alpha-D-glucosamine 1-phosphate + acetyl-CoA = N-acetyl-alpha-D-glucosamine 1-phosphate + CoA + H(+). It catalyses the reaction N-acetyl-alpha-D-glucosamine 1-phosphate + UTP + H(+) = UDP-N-acetyl-alpha-D-glucosamine + diphosphate. The protein operates within nucleotide-sugar biosynthesis; UDP-N-acetyl-alpha-D-glucosamine biosynthesis; N-acetyl-alpha-D-glucosamine 1-phosphate from alpha-D-glucosamine 6-phosphate (route II): step 2/2. It functions in the pathway nucleotide-sugar biosynthesis; UDP-N-acetyl-alpha-D-glucosamine biosynthesis; UDP-N-acetyl-alpha-D-glucosamine from N-acetyl-alpha-D-glucosamine 1-phosphate: step 1/1. It participates in bacterial outer membrane biogenesis; LPS lipid A biosynthesis. Its function is as follows. Catalyzes the last two sequential reactions in the de novo biosynthetic pathway for UDP-N-acetylglucosamine (UDP-GlcNAc). The C-terminal domain catalyzes the transfer of acetyl group from acetyl coenzyme A to glucosamine-1-phosphate (GlcN-1-P) to produce N-acetylglucosamine-1-phosphate (GlcNAc-1-P), which is converted into UDP-GlcNAc by the transfer of uridine 5-monophosphate (from uridine 5-triphosphate), a reaction catalyzed by the N-terminal domain. The protein is Bifunctional protein GlmU of Xanthomonas campestris pv. campestris (strain B100).